The primary structure comprises 86 residues: Actinorhodin polyketide synthase acyl carrier protein (86 aa).

A Carrier domain is found at 4–82 (LLTTDDLRRA…ELLDLINGAL (79 aa)). The residue at position 42 (S42) is an O-(pantetheine 4'-phosphoryl)serine.

In terms of processing, 4'-phosphopantetheine is transferred from CoA to a specific serine of the apo-ACP-like protein.

It participates in antibiotic biosynthesis; actinorhodin biosynthesis. Its function is as follows. Acyl carrier protein. The chain is Actinorhodin polyketide synthase acyl carrier protein from Streptomyces coelicolor (strain ATCC BAA-471 / A3(2) / M145).